We begin with the raw amino-acid sequence, 289 residues long: Zinc finger matrin-type protein 3 (289 aa).

2 consecutive Matrin-type zinc fingers follow at residues 70–100 and 147–177; these read LFCK…KLRN and DYCK…RLRL. 2 disordered regions span residues 180 to 202 and 265 to 289; these read AQSH…EGSE and ESKQ…GYVQ. A Matrin-type 3 zinc finger spans residues 245–275; sequence FYCSMCNVGAGEEVEFRQHLESKQHKSKVSE. A compositionally biased stretch (basic and acidic residues) spans 265-282; sequence ESKQHKSKVSEQRYRSEM.

Interacts with dsRNA. Highly expressed in brain, gut, lung, and testis.

It is found in the nucleus. The protein resides in the nucleolus. Its function is as follows. Acts as a bona fide target gene of p53/TP53. May play a role in the TP53-dependent growth regulatory pathway. May contribute to TP53-mediated apoptosis by regulation of TP53 expression and translocation to the nucleus and nucleolus. This Rattus norvegicus (Rat) protein is Zinc finger matrin-type protein 3.